A 54-amino-acid chain; its full sequence is uncharacterized protein (54 aa).

Residues 1–28 (MDRKKDEIQRKYREQMREKKEREKEDGS) are compositionally biased toward basic and acidic residues. Residues 1–29 (MDRKKDEIQRKYREQMREKKEREKEDGSS) form a disordered region. Residues 31–51 (TFEIVVVLAIIILMFFFNSVF) form a helical membrane-spanning segment.

The protein localises to the cell membrane. This is an uncharacterized protein from Bacillus subtilis (strain 168).